Reading from the N-terminus, the 95-residue chain is Co-chaperonin GroES (95 aa).

It belongs to the GroES chaperonin family. In terms of assembly, heptamer of 7 subunits arranged in a ring. Interacts with the chaperonin GroEL.

The protein localises to the cytoplasm. Together with the chaperonin GroEL, plays an essential role in assisting protein folding. The GroEL-GroES system forms a nano-cage that allows encapsulation of the non-native substrate proteins and provides a physical environment optimized to promote and accelerate protein folding. GroES binds to the apical surface of the GroEL ring, thereby capping the opening of the GroEL channel. The polypeptide is Co-chaperonin GroES (Zymomonas mobilis subsp. mobilis (strain ATCC 31821 / ZM4 / CP4)).